The chain runs to 141 residues: Large ribosomal subunit protein uL16 (141 aa).

The segment covering 1-16 has biased composition (basic residues); it reads MLMPRKPPKGFRKPHH. The segment at 1–27 is disordered; that stretch reads MLMPRKPPKGFRKPHHPDRSGASKGGN.

The protein belongs to the universal ribosomal protein uL16 family. Part of the 50S ribosomal subunit.

In terms of biological role, binds 23S rRNA and is also seen to make contacts with the A and possibly P site tRNAs. This is Large ribosomal subunit protein uL16 from Salinispora arenicola (strain CNS-205).